Consider the following 277-residue polypeptide: Probable CCR4-associated factor 1 homolog 10 (277 aa).

A divalent metal cation contacts are provided by aspartate 40, glutamate 42, aspartate 166, and aspartate 235.

The protein belongs to the CAF1 family. Component of the CCR4-NOT complex, at least composed of CRR4 and CAF1 proteins. A divalent metal cation serves as cofactor.

The protein resides in the nucleus. The protein localises to the cytoplasm. It carries out the reaction Exonucleolytic cleavage of poly(A) to 5'-AMP.. Functionally, ubiquitous transcription factor required for a diverse set of processes. It is a component of the CCR4 complex involved in the control of gene expression. This is Probable CCR4-associated factor 1 homolog 10 (CAF1-10) from Arabidopsis thaliana (Mouse-ear cress).